Reading from the N-terminus, the 1502-residue chain is tRNA (32-2'-O)-methyltransferase regulator trm732 (1502 aa).

Belongs to the THADA family.

It is found in the cytoplasm. The protein localises to the nucleus. Its function is as follows. Together with methyltransferase trm7, methylates the 2'-O-ribose of nucleotides at position 32 of the anticodon loop of substrate tRNAs. In Schizosaccharomyces pombe (strain 972 / ATCC 24843) (Fission yeast), this protein is tRNA (32-2'-O)-methyltransferase regulator trm732.